The following is a 160-amino-acid chain: S-adenosylmethionine decarboxylase proenzyme (160 aa).

The active-site Schiff-base intermediate with substrate; via pyruvic acid is S73. At S73 the chain carries Pyruvic acid (Ser); by autocatalysis. H78 functions as the Proton acceptor; for processing activity in the catalytic mechanism. The active-site Proton donor; for catalytic activity is C93.

Belongs to the prokaryotic AdoMetDC family. Type 1 subfamily. Heterotetramer of two alpha and two beta chains arranged as a dimer of alpha/beta heterodimers. It depends on pyruvate as a cofactor. Is synthesized initially as an inactive proenzyme. Formation of the active enzyme involves a self-maturation process in which the active site pyruvoyl group is generated from an internal serine residue via an autocatalytic post-translational modification. Two non-identical subunits are generated from the proenzyme in this reaction, and the pyruvate is formed at the N-terminus of the alpha chain, which is derived from the carboxyl end of the proenzyme. The post-translation cleavage follows an unusual pathway, termed non-hydrolytic serinolysis, in which the side chain hydroxyl group of the serine supplies its oxygen atom to form the C-terminus of the beta chain, while the remainder of the serine residue undergoes an oxidative deamination to produce ammonia and the pyruvoyl group blocking the N-terminus of the alpha chain.

It catalyses the reaction S-adenosyl-L-methionine + H(+) = S-adenosyl 3-(methylsulfanyl)propylamine + CO2. It functions in the pathway amine and polyamine biosynthesis; S-adenosylmethioninamine biosynthesis; S-adenosylmethioninamine from S-adenosyl-L-methionine: step 1/1. In terms of biological role, catalyzes the decarboxylation of S-adenosylmethionine to S-adenosylmethioninamine (dcAdoMet), the propylamine donor required for the synthesis of the polyamines spermine and spermidine from the diamine putrescine. This Pseudomonas aeruginosa (strain LESB58) protein is S-adenosylmethionine decarboxylase proenzyme.